The primary structure comprises 711 residues: Ent-copalyl diphosphate synthase 1 (711 aa).

Residue K145 participates in substrate binding. Mg(2+) contacts are provided by D277 and D279. Positions 277-280 (DIDD) match the DXDD motif motif. Residue K364 participates in substrate binding.

The protein belongs to the terpene synthase family. Tpsc subfamily. It depends on Mg(2+) as a cofactor.

The catalysed reaction is (2E,6E,10E)-geranylgeranyl diphosphate = ent-copalyl diphosphate. It functions in the pathway secondary metabolite biosynthesis; terpenoid biosynthesis. In terms of biological role, involved in the biosynthesis of ent-kaurene diterpenoids natural products such as oridonin, miltiradiene, eriocalyxin B and nezukol, known to exhibit antitumor, anti-inflammatory and antibacterial activities. Catalyzes the conversion of (2E,6E,10E)-geranylgeranyl diphosphate (GGPP) to ent-copalyl diphosphate (ent-CPP). The protein is Ent-copalyl diphosphate synthase 1 of Isodon japonicus (Scutellaria japonica).